The primary structure comprises 326 residues: Putative F-box protein At3g22710 (326 aa).

The F-box domain maps to 1–50; that stretch reads MTMPDLPPDLVEEILSRVPATSVKKLRSTCTQWNAIFKDERFTEKHFSKA.

The polypeptide is Putative F-box protein At3g22710 (Arabidopsis thaliana (Mouse-ear cress)).